The sequence spans 208 residues: Small ribosomal subunit protein uS4 (208 aa).

One can recognise an S4 RNA-binding domain in the interval 95-161 (MRLDALVLRA…VPLQVAAAGA (67 aa)).

It belongs to the universal ribosomal protein uS4 family. Part of the 30S ribosomal subunit. Contacts protein S5. The interaction surface between S4 and S5 is involved in control of translational fidelity.

Its function is as follows. One of the primary rRNA binding proteins, it binds directly to 16S rRNA where it nucleates assembly of the body of the 30S subunit. With S5 and S12 plays an important role in translational accuracy. This Pseudarthrobacter chlorophenolicus (strain ATCC 700700 / DSM 12829 / CIP 107037 / JCM 12360 / KCTC 9906 / NCIMB 13794 / A6) (Arthrobacter chlorophenolicus) protein is Small ribosomal subunit protein uS4.